A 461-amino-acid polypeptide reads, in one-letter code: ATP synthase subunit beta 2 (461 aa).

151 to 158 (GGAGVGKT) serves as a coordination point for ATP.

The protein belongs to the ATPase alpha/beta chains family. In terms of assembly, F-type ATPases have 2 components, CF(1) - the catalytic core - and CF(0) - the membrane proton channel. CF(1) has five subunits: alpha(3), beta(3), gamma(1), delta(1), epsilon(1). CF(0) has three main subunits: a(1), b(2) and c(9-12). The alpha and beta chains form an alternating ring which encloses part of the gamma chain. CF(1) is attached to CF(0) by a central stalk formed by the gamma and epsilon chains, while a peripheral stalk is formed by the delta and b chains.

It localises to the cell inner membrane. It catalyses the reaction ATP + H2O + 4 H(+)(in) = ADP + phosphate + 5 H(+)(out). In terms of biological role, produces ATP from ADP in the presence of a proton gradient across the membrane. The catalytic sites are hosted primarily by the beta subunits. The chain is ATP synthase subunit beta 2 from Vibrio campbellii (strain ATCC BAA-1116).